Consider the following 727-residue polypeptide: Bromodomain-containing protein C631.02 (727 aa).

Disordered stretches follow at residues 27 to 231 (AATI…PPMT) and 341 to 369 (TSYS…AAMY). Residues 56-68 (ENDDGTLDLFGDS) are compositionally biased toward acidic residues. Basic and acidic residues predominate over residues 69 to 78 (ELEKEQKGDN). Residues 102 to 114 (PSSPTHPSVSNIT) show a composition bias toward polar residues. Positions 128 to 150 (EEEKSSESLDSHTHPPKRVRNED) are enriched in basic and acidic residues. The segment covering 153 to 177 (LTFSKTSPVSPSSLKDGASNTVTND) has biased composition (polar residues). Ser162 is subject to Phosphoserine. Residues 206–231 (SKEHSSPHDETVKKEENDKDQYPPMT) show a composition bias toward basic and acidic residues. Residues 229-335 (PMTKEQHKYI…ATFERQLKQL (107 aa)) form the Bromo 1 domain. One can recognise a Bromo 2 domain in the interval 388–497 (RKDAAEMKFC…SIFQKLWANK (110 aa)). One can recognise an NET domain in the interval 570–650 (RSLSVDIYPP…KGDEIGAEAL (81 aa)). Residues 699–727 (IAAYNTKSLGSDDSSSEDDGESSESSDSA) are disordered. Residues 712–727 (SSSEDDGESSESSDSA) show a composition bias toward acidic residues.

It belongs to the BET family.

It is found in the nucleus. The chain is Bromodomain-containing protein C631.02 from Schizosaccharomyces pombe (strain 972 / ATCC 24843) (Fission yeast).